The primary structure comprises 417 residues: Tyrosine--tRNA ligase (417 aa).

An L-tyrosine-binding site is contributed by Tyr39. A 'HIGH' region motif is present at residues 44–53 (PTAASLHAGG). Residues Tyr176 and Gln180 each coordinate L-tyrosine. Positions 236 to 240 (KMGKS) match the 'KMSKS' region motif. Lys239 is a binding site for ATP. One can recognise an S4 RNA-binding domain in the interval 350–417 (LGLLTLLVRA…KKKHLLVRPV (68 aa)).

The protein belongs to the class-I aminoacyl-tRNA synthetase family. TyrS type 1 subfamily. Homodimer.

It is found in the cytoplasm. It carries out the reaction tRNA(Tyr) + L-tyrosine + ATP = L-tyrosyl-tRNA(Tyr) + AMP + diphosphate + H(+). Its function is as follows. Catalyzes the attachment of tyrosine to tRNA(Tyr) in a two-step reaction: tyrosine is first activated by ATP to form Tyr-AMP and then transferred to the acceptor end of tRNA(Tyr). The chain is Tyrosine--tRNA ligase from Rhizobium meliloti (strain 1021) (Ensifer meliloti).